The chain runs to 460 residues: UDP-N-acetylmuramate--L-alanine ligase (460 aa).

112–118 (GTHGKTT) serves as a coordination point for ATP.

Belongs to the MurCDEF family.

It localises to the cytoplasm. It carries out the reaction UDP-N-acetyl-alpha-D-muramate + L-alanine + ATP = UDP-N-acetyl-alpha-D-muramoyl-L-alanine + ADP + phosphate + H(+). It functions in the pathway cell wall biogenesis; peptidoglycan biosynthesis. Cell wall formation. The chain is UDP-N-acetylmuramate--L-alanine ligase from Pelobacter propionicus (strain DSM 2379 / NBRC 103807 / OttBd1).